We begin with the raw amino-acid sequence, 154 residues long: Iron-sulfur cluster assembly 2 homolog, mitochondrial (154 aa).

Residues 1-8 (MAAAWGSS) constitute a mitochondrion transit peptide. Residues 29–49 (SLGPQARREASSSSPEAGEGQ) are disordered. The span at 39–49 (SSSSPEAGEGQ) shows a compositional bias: low complexity. Fe cation-binding residues include Cys79, Cys144, and Cys146.

Belongs to the HesB/IscA family. As to quaternary structure, heterotetramer; forms a dimer of dimers with IBA57. Interacts with [2Fe-2S]-ISCA2 forming the heterodimer [2Fe- 2S]-ISCA2-IBA57 complex; [2Fe-2S] cluster binding is absolutely required to promote the complex formation.

The protein resides in the mitochondrion. Its function is as follows. Involved in the maturation of mitochondrial 4Fe-4S proteins functioning late in the iron-sulfur cluster assembly pathway. May be involved in the binding of an intermediate of Fe/S cluster assembly. The chain is Iron-sulfur cluster assembly 2 homolog, mitochondrial (ISCA2) from Homo sapiens (Human).